Reading from the N-terminus, the 461-residue chain is MEKYVVVLAAGKGTRMKTKLYKVLHQVCGKAMVEHVVDAARAVKPSKIVTIVGHGAEDVEKVLAGKSEFVMQEEQLGTGHAVMQAEGQLAALEGATLVVTGDTPLFTSETFEKLFAYHEEEGNAATVLTAEAPDPFGYGRIIRDDQGNVLRIVEQKDGKPEELKVKEINTGVFCFDNQDLWVALKQVGNDNSQGEYYLTDVLEILRKAGKKVGAYKMPDFSESLGVNDRIALAEATRIMQRRINEGHMRDGVTFIDPATAYIDADVEIGNDTVIEGGVTIKGHTVIGSDCLITSGSRIVDSQIGNGVTVTSSTIEESIMEDNTDIGPNSHLRPKALIKRGAHLGNFVEVKKAEIGENTKVGHLTYVGDATLGKDINVGCGVIFSNFDGVKKFHTTVGDKSFIGAGSTLVSPINVADHAFIAADSTITKDVGKYEMAIARGRQVNKKDYWHKLPLSEDEEWK.

Residues 1-229 (MEKYVVVLAA…FSESLGVNDR (229 aa)) are pyrophosphorylase. UDP-N-acetyl-alpha-D-glucosamine contacts are provided by residues 8–11 (LAAG), Lys-22, Gln-72, and 77–78 (GT). Asp-102 provides a ligand contact to Mg(2+). 4 residues coordinate UDP-N-acetyl-alpha-D-glucosamine: Gly-139, Glu-154, Asn-169, and Asn-227. Mg(2+) is bound at residue Asn-227. Residues 230 to 250 (IALAEATRIMQRRINEGHMRD) are linker. The segment at 251-461 (GVTFIDPATA…LPLSEDEEWK (211 aa)) is N-acetyltransferase. UDP-N-acetyl-alpha-D-glucosamine is bound by residues Arg-332 and Lys-350. Catalysis depends on His-362, which acts as the Proton acceptor. 2 residues coordinate UDP-N-acetyl-alpha-D-glucosamine: Tyr-365 and Asn-376. Residues Ala-422 and Arg-439 each coordinate acetyl-CoA.

It in the N-terminal section; belongs to the N-acetylglucosamine-1-phosphate uridyltransferase family. In the C-terminal section; belongs to the transferase hexapeptide repeat family. As to quaternary structure, homotrimer. The cofactor is Mg(2+).

It is found in the cytoplasm. The enzyme catalyses alpha-D-glucosamine 1-phosphate + acetyl-CoA = N-acetyl-alpha-D-glucosamine 1-phosphate + CoA + H(+). It carries out the reaction N-acetyl-alpha-D-glucosamine 1-phosphate + UTP + H(+) = UDP-N-acetyl-alpha-D-glucosamine + diphosphate. The protein operates within nucleotide-sugar biosynthesis; UDP-N-acetyl-alpha-D-glucosamine biosynthesis; N-acetyl-alpha-D-glucosamine 1-phosphate from alpha-D-glucosamine 6-phosphate (route II): step 2/2. It functions in the pathway nucleotide-sugar biosynthesis; UDP-N-acetyl-alpha-D-glucosamine biosynthesis; UDP-N-acetyl-alpha-D-glucosamine from N-acetyl-alpha-D-glucosamine 1-phosphate: step 1/1. Its pathway is bacterial outer membrane biogenesis; LPS lipid A biosynthesis. Catalyzes the last two sequential reactions in the de novo biosynthetic pathway for UDP-N-acetylglucosamine (UDP-GlcNAc). The C-terminal domain catalyzes the transfer of acetyl group from acetyl coenzyme A to glucosamine-1-phosphate (GlcN-1-P) to produce N-acetylglucosamine-1-phosphate (GlcNAc-1-P), which is converted into UDP-GlcNAc by the transfer of uridine 5-monophosphate (from uridine 5-triphosphate), a reaction catalyzed by the N-terminal domain. This is Bifunctional protein GlmU from Lactobacillus delbrueckii subsp. bulgaricus (strain ATCC BAA-365 / Lb-18).